The chain runs to 617 residues: Electron transfer flavoprotein-ubiquinone oxidoreductase, mitochondrial (617 aa).

The transit peptide at 1 to 33 (MLVPLAKLSCPAYQCFHALKIKKNYLPLCATRW) directs the protein to the mitochondrion. 71–85 (VVIVGAGPAGLSAAV) is an FAD binding site. Position 96 is an N6-acetyllysine (lysine 96). Residues 109–130 (IGAHTLSGACLDPGAFKELFPD) lie within the membrane without spanning it. 2 positions are modified to N6-acetyllysine: lysine 132 and lysine 223. Residues glycine 305 and glycine 306 each contribute to the a ubiquinone site. Residue lysine 357 is modified to N6-acetyllysine. The stretch at 428–447 (MGLHVTEYEDNLKNSWVWKE) is an intramembrane region. Serine 551 bears the Phosphoserine mark. [4Fe-4S] cluster is bound by residues cysteine 561, cysteine 586, cysteine 589, and cysteine 592. The 30-residue stretch at 577 to 606 (FRLQINAQNCVHCKTCDIKDPSQNINWVVP) folds into the 4Fe-4S ferredoxin-type domain.

The protein belongs to the ETF-QO/FixC family. In terms of assembly, monomer. It depends on [4Fe-4S] cluster as a cofactor. The cofactor is FAD.

The protein localises to the mitochondrion inner membrane. The catalysed reaction is a ubiquinone + reduced [electron-transfer flavoprotein] = a ubiquinol + oxidized [electron-transfer flavoprotein] + H(+). In terms of biological role, accepts electrons from ETF and reduces ubiquinone. The sequence is that of Electron transfer flavoprotein-ubiquinone oxidoreductase, mitochondrial (ETFDH) from Pongo abelii (Sumatran orangutan).